The chain runs to 773 residues: Linolenate 9R-lipoxygenase (773 aa).

Residues Tyr176 to Ile773 enclose the Lipoxygenase domain. His515, His520, and Ile773 together coordinate Fe cation.

The protein belongs to the lipoxygenase family.

The catalysed reaction is (9Z,12Z,15Z)-octadecatrienoate + O2 = (9R,10E,12Z,15Z)-9-hydroperoxyoctadeca-10,12,15-trienoate. Its pathway is lipid metabolism; oxylipin biosynthesis. Catalyzes the conversion of alpha-linoleate to (9R,10E,12Z,15Z)-9-hydroperoxyoctadeca-10,12,15-trienoate in oxylipin biosynthesis. Also converts alpha-linoleate to (9R,10E,12Z)-9-hydroperoxyoctadeca-10,12-dienoate. This Nostoc sp. (strain PCC 7120 / SAG 25.82 / UTEX 2576) protein is Linolenate 9R-lipoxygenase.